The sequence spans 92 residues: UPF0250 protein Avin_08440 (92 aa).

This sequence belongs to the UPF0250 family.

This chain is UPF0250 protein Avin_08440, found in Azotobacter vinelandii (strain DJ / ATCC BAA-1303).